The following is a 154-amino-acid chain: Leghemoglobin-2 (154 aa).

One can recognise a Globin domain in the interval 3–151; it reads ALTESQAALV…LAIVIKKEMN (149 aa). Residue Ser46 coordinates heme b. Ser46 carries the phosphoserine modification. His64 serves as a coordination point for O2. Residues Lys67, His98, and Lys101 each contribute to the heme b site. Nitrated tyrosine is present on Tyr139.

This sequence belongs to the plant globin family. In terms of assembly, monomer. Nitrated in effective nodules and particularly in hypoxic conditions; this mechanism may play a protective role in the symbiosis by buffering toxic peroxynitrite NO(2)(-). Nitration level decrease during nodule senescence. In terms of processing, phosphorylation at Ser-46 disrupts the molecular environment of its porphyrin ring oxygen binding pocket, thus leading to a reduced oxygen consumption and to the delivery of oxygen O(2) to symbiosomes. In terms of tissue distribution, root nodules.

Its subcellular location is the cytoplasm. It is found in the cytosol. The protein localises to the nucleus. Its function is as follows. Leghemoglobin that reversibly binds oxygen O(2) through a pentacoordinated heme iron. In root nodules, facilitates the diffusion of oxygen to the bacteroids while preventing the bacterial nitrogenase from being inactivated by buffering dioxygen, nitric oxide and carbon monoxide, and promoting the formation of reactive oxygen species (ROS, e.g. H(2)O(2)). This role is essential for symbiotic nitrogen fixation (SNF). This is Leghemoglobin-2 from Lupinus luteus (European yellow lupine).